The sequence spans 836 residues: Pentatricopeptide repeat-containing protein At2g39620 (836 aa).

PPR repeat units lie at residues Met-1–Pro-35, His-36–Pro-62, Gly-63–Pro-98, Asp-99–Ser-133, Asp-134–Lys-164, Asp-165–Ile-199, Asp-200–Lys-230, Ile-233–Lys-263, Asp-264–Met-298, Asn-299–Gly-333, Asp-334–Arg-364, Asp-365–Pro-399, Asn-400–Ser-434, Glu-435–Lys-465, Asp-466–Pro-500, Asp-501–Ser-535, Glu-536–Glu-566, Ser-568–Pro-602, Asn-603–Ser-637, Gln-638–Lys-668, Tyr-669–Pro-703, Asp-704–Arg-734, and Glu-740–Lys-770. The interval Val-775–Val-836 is type E motif; degenerate.

The protein belongs to the PPR family. PCMP-E subfamily.

In Arabidopsis thaliana (Mouse-ear cress), this protein is Pentatricopeptide repeat-containing protein At2g39620 (PCMP-E33).